A 503-amino-acid polypeptide reads, in one-letter code: Cobyric acid synthase (503 aa).

One can recognise a GATase cobBQ-type domain in the interval 251–450 (DLDIAVIRLP…IHGIFENAAF (200 aa)). Catalysis depends on cysteine 331, which acts as the Nucleophile. The active site involves histidine 442.

The protein belongs to the CobB/CobQ family. CobQ subfamily.

Its pathway is cofactor biosynthesis; adenosylcobalamin biosynthesis. Functionally, catalyzes amidations at positions B, D, E, and G on adenosylcobyrinic A,C-diamide. NH(2) groups are provided by glutamine, and one molecule of ATP is hydrogenolyzed for each amidation. This Dehalococcoides mccartyi (strain CBDB1) protein is Cobyric acid synthase.